We begin with the raw amino-acid sequence, 848 residues long: Neuroligin-3 (848 aa).

The N-terminal stretch at 1-37 is a signal peptide; sequence MWLRLGPPSLSLSPKPTVGRSLCLTLWFLSLALRAST. Residues 38–709 lie on the Extracellular side of the membrane; it reads QAPAPTVNTH…NPRDYSTELS (672 aa). N-linked (GlcNAc...) asparagine glycosylation is present at Asn98. A disulfide bridge links Cys106 with Cys141. The interval 170-195 is disordered; the sequence is RKGGSGAKKQGEDLADNDGDEDEDIR. The segment covering 182-194 has biased composition (acidic residues); it reads DLADNDGDEDEDI. 2 disulfide bridges follow: Cys340–Cys351 and Cys510–Cys544. N-linked (GlcNAc...) asparagine glycosylation occurs at Asn545. 2 stretches are compositionally biased toward polar residues: residues 645-656 and 677-689; these read TKVPPPDTTHSS and AYSNENAQGSWNG. The tract at residues 645–694 is disordered; the sequence is TKVPPPDTTHSSHITRRPNGKTWSTKRPAISPAYSNENAQGSWNGDQDAG. The helical transmembrane segment at 710–730 threads the bilayer; the sequence is VTIAVGASLLFLNVLAFAALY. The Cytoplasmic portion of the chain corresponds to 731–848; that stretch reads YRKDKRRQEP…LPHSHSTTRV (118 aa). The residue at position 745 (Ser745) is a Phosphoserine. Tyr792 bears the Phosphotyrosine mark.

This sequence belongs to the type-B carboxylesterase/lipase family. Homodimer, and heterodimer with NLGN1 and NLGN2. Interacts with neurexins NRXN1, NRXN2 and NRXN3. Interaction with neurexins is mediated by heparan sulfate glycan modification on neurexin. Interacts (via its C-terminus) with DLG4/PSD-95 (via PDZ domain 3). Expressed in the blood vessel walls (at protein level). Detected in throughout the brain and in spinal cord. Detected in brain, and at lower levels in pancreas islet beta cells.

It localises to the cell membrane. Its subcellular location is the synapse. In terms of biological role, cell surface protein involved in cell-cell-interactions via its interactions with neurexin family members. Plays a role in synapse function and synaptic signal transmission, and may mediate its effects by clustering other synaptic proteins. May promote the initial formation of synapses, but is not essential for this. May also play a role in glia-glia or glia-neuron interactions in the developing peripheral nervous system. The polypeptide is Neuroligin-3 (NLGN3) (Homo sapiens (Human)).